Here is a 337-residue protein sequence, read N- to C-terminus: Holliday junction branch migration complex subunit RuvB (337 aa).

The segment at 1 to 179 is large ATPase domain (RuvB-L); the sequence is MTHQVSVLHQ…FSFTGRVAYY (179 aa). ATP-binding positions include Leu-18, Arg-19, Gly-60, Lys-63, Thr-64, Ser-65, 126–128, Arg-169, Tyr-179, and Arg-216; that span reads EDY. Thr-64 contributes to the Mg(2+) binding site. The small ATPAse domain (RuvB-S) stretch occupies residues 180-250; the sequence is SDEDLATILR…VAEKALAMLL (71 aa). A head domain (RuvB-H) region spans residues 253-337; it reads EWGLNEIDIK…DNLQSLGEEK (85 aa). Residues Lys-308 and Arg-313 each contribute to the DNA site.

The protein belongs to the RuvB family. In terms of assembly, homohexamer. Forms an RuvA(8)-RuvB(12)-Holliday junction (HJ) complex. HJ DNA is sandwiched between 2 RuvA tetramers; dsDNA enters through RuvA and exits via RuvB. An RuvB hexamer assembles on each DNA strand where it exits the tetramer. Each RuvB hexamer is contacted by two RuvA subunits (via domain III) on 2 adjacent RuvB subunits; this complex drives branch migration. In the full resolvosome a probable DNA-RuvA(4)-RuvB(12)-RuvC(2) complex forms which resolves the HJ.

It is found in the cytoplasm. It catalyses the reaction ATP + H2O = ADP + phosphate + H(+). Its function is as follows. The RuvA-RuvB-RuvC complex processes Holliday junction (HJ) DNA during genetic recombination and DNA repair, while the RuvA-RuvB complex plays an important role in the rescue of blocked DNA replication forks via replication fork reversal (RFR). RuvA specifically binds to HJ cruciform DNA, conferring on it an open structure. The RuvB hexamer acts as an ATP-dependent pump, pulling dsDNA into and through the RuvAB complex. RuvB forms 2 homohexamers on either side of HJ DNA bound by 1 or 2 RuvA tetramers; 4 subunits per hexamer contact DNA at a time. Coordinated motions by a converter formed by DNA-disengaged RuvB subunits stimulates ATP hydrolysis and nucleotide exchange. Immobilization of the converter enables RuvB to convert the ATP-contained energy into a lever motion, pulling 2 nucleotides of DNA out of the RuvA tetramer per ATP hydrolyzed, thus driving DNA branch migration. The RuvB motors rotate together with the DNA substrate, which together with the progressing nucleotide cycle form the mechanistic basis for DNA recombination by continuous HJ branch migration. Branch migration allows RuvC to scan DNA until it finds its consensus sequence, where it cleaves and resolves cruciform DNA. In Chlamydia abortus (strain DSM 27085 / S26/3) (Chlamydophila abortus), this protein is Holliday junction branch migration complex subunit RuvB.